Reading from the N-terminus, the 124-residue chain is S-adenosylmethionine decarboxylase proenzyme (124 aa).

Catalysis depends on Ser63, which acts as the Schiff-base intermediate with substrate; via pyruvic acid. Ser63 carries the post-translational modification Pyruvic acid (Ser); by autocatalysis. His68 serves as the catalytic Proton acceptor; for processing activity. Cys83 acts as the Proton donor; for catalytic activity in catalysis.

This sequence belongs to the prokaryotic AdoMetDC family. Type 1 subfamily. In terms of assembly, heterotetramer of two alpha and two beta chains arranged as a dimer of alpha/beta heterodimers. Requires pyruvate as cofactor. In terms of processing, is synthesized initially as an inactive proenzyme. Formation of the active enzyme involves a self-maturation process in which the active site pyruvoyl group is generated from an internal serine residue via an autocatalytic post-translational modification. Two non-identical subunits are generated from the proenzyme in this reaction, and the pyruvate is formed at the N-terminus of the alpha chain, which is derived from the carboxyl end of the proenzyme. The post-translation cleavage follows an unusual pathway, termed non-hydrolytic serinolysis, in which the side chain hydroxyl group of the serine supplies its oxygen atom to form the C-terminus of the beta chain, while the remainder of the serine residue undergoes an oxidative deamination to produce ammonia and the pyruvoyl group blocking the N-terminus of the alpha chain.

The enzyme catalyses S-adenosyl-L-methionine + H(+) = S-adenosyl 3-(methylsulfanyl)propylamine + CO2. Its pathway is amine and polyamine biosynthesis; S-adenosylmethioninamine biosynthesis; S-adenosylmethioninamine from S-adenosyl-L-methionine: step 1/1. Its function is as follows. Catalyzes the decarboxylation of S-adenosylmethionine to S-adenosylmethioninamine (dcAdoMet), the propylamine donor required for the synthesis of the polyamines spermine and spermidine from the diamine putrescine. The protein is S-adenosylmethionine decarboxylase proenzyme of Geobacillus sp. (strain WCH70).